A 437-amino-acid polypeptide reads, in one-letter code: MKNKIIASLKERISRQNWENWFLDFNIRELKDNHVVFEVGNFFIKERLEKKFNKIISKVVKDILGKDATYEITFKEIPYETKVESGPLIKKRPLLITPLNPKYTFENLVVGEFNKFAYNVFLEASKNPGFYNPIFLYSGVGLGKTHLAQALGNYLLETDPDMKVAYLTSEEFMNEMFSAIKNGNIDEFREKYRKKADILIIDDIQFLIGIKSAQTELFHTFNTIHEAGKQIIICSDRTPQELKDFHSRMISRFQMGLLVKIEKPSSEDLFKIGKKISEMKNVEIDDEIIKYISKIYDNPRLIHGAILRLIAYRNLYGTLNLSIAESILTNVSKPPKSFEEKLLEILSEIFDCSPDDITSSKRTKNISYARKIGMYFAVKKLNLSTRDVGTIFKKSHSSVVQNVKQVEKLLKEGNVILKNYLKQIDKMSKGFAQGESM.

Positions M1 to D67 are domain I, interacts with DnaA modulators. The domain II stretch occupies residues D67–T97. A domain III, AAA+ region region spans residues P98 to R313. ATP is bound by residues G141, G143, K144, and T145. The interval N314–M437 is domain IV, binds dsDNA.

Belongs to the DnaA family. In terms of assembly, oligomerizes as a right-handed, spiral filament on DNA at oriC.

The protein localises to the cytoplasm. Plays an essential role in the initiation and regulation of chromosomal replication. ATP-DnaA binds to the origin of replication (oriC) to initiate formation of the DNA replication initiation complex once per cell cycle. Binds the DnaA box (a 9 base pair repeat at the origin) and separates the double-stranded (ds)DNA. Forms a right-handed helical filament on oriC DNA; dsDNA binds to the exterior of the filament while single-stranded (ss)DNA is stabiized in the filament's interior. The ATP-DnaA-oriC complex binds and stabilizes one strand of the AT-rich DNA unwinding element (DUE), permitting loading of DNA polymerase. After initiation quickly degrades to an ADP-DnaA complex that is not apt for DNA replication. Binds acidic phospholipids. This chain is Chromosomal replication initiator protein DnaA, found in Thermosipho melanesiensis (strain DSM 12029 / CIP 104789 / BI429).